The chain runs to 53 residues: Large ribosomal subunit protein bL33 (53 aa).

It belongs to the bacterial ribosomal protein bL33 family.

This Ureaplasma parvum serovar 3 (strain ATCC 27815 / 27 / NCTC 11736) protein is Large ribosomal subunit protein bL33.